Reading from the N-terminus, the 393-residue chain is Pinosylvin synthase (393 aa).

57 to 60 is a substrate binding site; it reads KFKR. Cys167 is an active-site residue. Residues Leu270 and 308-310 contribute to the substrate site; that span reads GGR.

Belongs to the thiolase-like superfamily. Chalcone/stilbene synthases family. In terms of assembly, homodimer.

Its subcellular location is the cytoplasm. It catalyses the reaction (E)-cinnamoyl-CoA + 3 malonyl-CoA + 3 H(+) = (E)-pinosylvin + 4 CO2 + 4 CoA. It carries out the reaction 3-phenylpropanoyl-CoA + 3 malonyl-CoA + 3 H(+) = dihydropinosylvin + 4 CO2 + 4 CoA. Its pathway is phytoalexin biosynthesis; hydropinosylvin biosynthesis. In terms of biological role, catalyzes the production of pinosylvin from cinnamoyl-CoA and malonyl-CoA, and dihydropinosylvin from dihydrocinnamoyl-CoA. This Pinus sylvestris (Scotch pine) protein is Pinosylvin synthase.